A 334-amino-acid polypeptide reads, in one-letter code: Probable N5-carboxyaminoimidazole ribonucleotide mutase (334 aa).

Residues S11, D14, and R41 each coordinate substrate.

The protein belongs to the AIR carboxylase family. Class I subfamily.

It catalyses the reaction 5-carboxyamino-1-(5-phospho-D-ribosyl)imidazole + H(+) = 5-amino-1-(5-phospho-D-ribosyl)imidazole-4-carboxylate. Its pathway is purine metabolism; IMP biosynthesis via de novo pathway; 5-amino-1-(5-phospho-D-ribosyl)imidazole-4-carboxylate from 5-amino-1-(5-phospho-D-ribosyl)imidazole (N5-CAIR route): step 2/2. Functionally, catalyzes the conversion of N5-carboxyaminoimidazole ribonucleotide (N5-CAIR) to 4-carboxy-5-aminoimidazole ribonucleotide (CAIR). The chain is Probable N5-carboxyaminoimidazole ribonucleotide mutase from Methanothermobacter thermautotrophicus (strain ATCC 29096 / DSM 1053 / JCM 10044 / NBRC 100330 / Delta H) (Methanobacterium thermoautotrophicum).